Reading from the N-terminus, the 235-residue chain is UPF0702 transmembrane protein YdfS (235 aa).

Transmembrane regions (helical) follow at residues 32-52 (MTIF…GLAY) and 60-80 (NMAI…FLSI).

It belongs to the UPF0702 family.

It localises to the cell membrane. This Bacillus subtilis (strain 168) protein is UPF0702 transmembrane protein YdfS (ydfS).